Here is a 700-residue protein sequence, read N- to C-terminus: Protein claret segregational (700 aa).

Phosphoserine is present on residues serine 94 and serine 96. The interval 141–185 (APSSITATAVKRPPVTRPAPRAAGGAAAKKPAGTGAAASSGAAAA) is disordered. A compositionally biased stretch (low complexity) spans 149–185 (AVKRPPVTRPAPRAAGGAAAKKPAGTGAAASSGAAAA). A coiled-coil region spans residues 196–346 (KARFHDLLEK…ELHNTVMDLR (151 aa)). In terms of domain architecture, Kinesin motor spans 348 to 670 (NIRVFCRIRP…LRFAASVNSC (323 aa)). 434–441 (GQTGSGKT) contacts ATP. Residues 664–668 (AASVN) are required for minus-end directionality. The interval 681 to 700 (LNNSVANSSTQSNNSGSFDK) is disordered.

It belongs to the TRAFAC class myosin-kinesin ATPase superfamily. Kinesin family. NCD subfamily.

The protein resides in the cytoplasm. Its subcellular location is the cytoskeleton. It catalyses the reaction ATP + H2O = ADP + phosphate + H(+). Minus-end-directed microtubule-based motor protein. Has ATPase activity. Required for normal chromosomal segregation in meiosis in females, and in early mitotic divisions of the embryo. The protein is Protein claret segregational (ncd) of Drosophila melanogaster (Fruit fly).